We begin with the raw amino-acid sequence, 303 residues long: Sushi domain-containing protein 6 (303 aa).

The first 39 residues, 1–39 (MCHGRIAPKSTSVFAVASVGHGVFLPLVILCTLLGDGLA), serve as a signal peptide directing secretion. The Sushi domain maps to 40–104 (SVCPLPPEPE…KPAMEISCRL (65 aa)). Topologically, residues 40–120 (SVCPLPPEPE…HTSLGVPTLS (81 aa)) are extracellular. 2 disulfides stabilise this stretch: Cys42-Cys89 and Cys74-Cys102. Residues 121–141 (IVASTASSVALILLLVVLFVL) traverse the membrane as a helical segment. Over 142–303 (LQPKLKSFHH…TDDIPLLKEA (162 aa)) the chain is Cytoplasmic. 2 disordered regions span residues 199–237 (VLSE…GQSG) and 263–282 (GSGN…NSDI).

It localises to the membrane. Functionally, may play a role in growth-suppressive activity and cell death. May be involved in the production of chemokine molecules in umbilical vein endothelial cells (HUVECs) cultured in THP1 monocyte LPS-induced medium. Plays a role in preventing tumor onset. This chain is Sushi domain-containing protein 6, found in Homo sapiens (Human).